The following is a 345-amino-acid chain: S-adenosylmethionine:tRNA ribosyltransferase-isomerase (345 aa).

This sequence belongs to the QueA family. In terms of assembly, monomer.

Its subcellular location is the cytoplasm. The enzyme catalyses 7-aminomethyl-7-carbaguanosine(34) in tRNA + S-adenosyl-L-methionine = epoxyqueuosine(34) in tRNA + adenine + L-methionine + 2 H(+). It participates in tRNA modification; tRNA-queuosine biosynthesis. In terms of biological role, transfers and isomerizes the ribose moiety from AdoMet to the 7-aminomethyl group of 7-deazaguanine (preQ1-tRNA) to give epoxyqueuosine (oQ-tRNA). The sequence is that of S-adenosylmethionine:tRNA ribosyltransferase-isomerase from Anaeromyxobacter dehalogenans (strain 2CP-1 / ATCC BAA-258).